The sequence spans 89 residues: MAKKSKVAKHERQQALVEQYAELRRTLKAEGRYDELRKLPRDSSPSRLHNRCELTGRPHGYMRKFGMSRIRFRELAHQGQLPGVKKASW.

It belongs to the universal ribosomal protein uS14 family. In terms of assembly, part of the 30S ribosomal subunit. Contacts proteins S3 and S10.

Its function is as follows. Binds 16S rRNA, required for the assembly of 30S particles and may also be responsible for determining the conformation of the 16S rRNA at the A site. This is Small ribosomal subunit protein uS14A from Listeria monocytogenes serovar 1/2a (strain ATCC BAA-679 / EGD-e).